Here is a 325-residue protein sequence, read N- to C-terminus: Protein TMED8 (325 aa).

The disordered stretch occupies residues 1-78; that stretch reads MSDLQAAEGP…MVSPVSKDAT (78 aa). The GOLD domain occupies 159-323; that stretch reads PPCIWTFAKV…NKTLYFHIYY (165 aa). Lys169 is subject to N6-acetyllysine. The interval 232–267 is disordered; sequence TVQVSDSSDDEDEEEEEEEEIEEPVPAGDVERGSRS. Acidic residues predominate over residues 238 to 254; sequence SSDDEDEEEEEEEEIEE.

This Homo sapiens (Human) protein is Protein TMED8 (TMED8).